A 511-amino-acid chain; its full sequence is Maturase K (511 aa).

Belongs to the intron maturase 2 family. MatK subfamily.

Its subcellular location is the plastid. The protein resides in the chloroplast. In terms of biological role, usually encoded in the trnK tRNA gene intron. Probably assists in splicing its own and other chloroplast group II introns. The chain is Maturase K from Bowiea volubilis (Climbing onion).